A 110-amino-acid chain; its full sequence is Large ribosomal subunit protein uL22 (110 aa).

This sequence belongs to the universal ribosomal protein uL22 family. Part of the 50S ribosomal subunit.

This protein binds specifically to 23S rRNA; its binding is stimulated by other ribosomal proteins, e.g. L4, L17, and L20. It is important during the early stages of 50S assembly. It makes multiple contacts with different domains of the 23S rRNA in the assembled 50S subunit and ribosome. Its function is as follows. The globular domain of the protein is located near the polypeptide exit tunnel on the outside of the subunit, while an extended beta-hairpin is found that lines the wall of the exit tunnel in the center of the 70S ribosome. This Yersinia enterocolitica serotype O:8 / biotype 1B (strain NCTC 13174 / 8081) protein is Large ribosomal subunit protein uL22.